A 105-amino-acid polypeptide reads, in one-letter code: Small ribosomal subunit protein uS10 (105 aa).

This sequence belongs to the universal ribosomal protein uS10 family. As to quaternary structure, part of the 30S ribosomal subunit.

In terms of biological role, involved in the binding of tRNA to the ribosomes. This chain is Small ribosomal subunit protein uS10, found in Picosynechococcus sp. (strain ATCC 27264 / PCC 7002 / PR-6) (Agmenellum quadruplicatum).